A 704-amino-acid chain; its full sequence is Eukaryotic translation initiation factor 2-alpha kinase 1 (704 aa).

The region spanning 224–667 (FEELELLGKG…LTSNLFHDLV (444 aa)) is the Protein kinase domain. Residues 230 to 238 (LGKGGYGSV) and lysine 253 each bind ATP. The active-site Proton acceptor is the aspartate 491.

This sequence belongs to the protein kinase superfamily. Ser/Thr protein kinase family. GCN2 subfamily. Autophosphorylated.

The catalysed reaction is L-seryl-[protein] + ATP = O-phospho-L-seryl-[protein] + ADP + H(+). The enzyme catalyses L-threonyl-[protein] + ATP = O-phospho-L-threonyl-[protein] + ADP + H(+). Functionally, mediates down-regulation of protein synthesis in response to stress conditions by the phosphorylation of the alpha subunit of eIF-2 (tif211) on 'Ser-52'. Protein synthesis is inhibited at the level of initiation. Activity is inhibited in the presence of heme. The polypeptide is Eukaryotic translation initiation factor 2-alpha kinase 1 (hri1) (Schizosaccharomyces pombe (strain 972 / ATCC 24843) (Fission yeast)).